The chain runs to 299 residues: ATP phosphoribosyltransferase (299 aa).

It belongs to the ATP phosphoribosyltransferase family. Long subfamily. In terms of assembly, equilibrium between an active dimeric form, an inactive hexameric form and higher aggregates. Interconversion between the various forms is largely reversible and is influenced by the natural substrates and inhibitors of the enzyme. Requires Mg(2+) as cofactor.

The protein resides in the cytoplasm. The catalysed reaction is 1-(5-phospho-beta-D-ribosyl)-ATP + diphosphate = 5-phospho-alpha-D-ribose 1-diphosphate + ATP. It functions in the pathway amino-acid biosynthesis; L-histidine biosynthesis; L-histidine from 5-phospho-alpha-D-ribose 1-diphosphate: step 1/9. With respect to regulation, feedback inhibited by histidine. In terms of biological role, catalyzes the condensation of ATP and 5-phosphoribose 1-diphosphate to form N'-(5'-phosphoribosyl)-ATP (PR-ATP). Has a crucial role in the pathway because the rate of histidine biosynthesis seems to be controlled primarily by regulation of HisG enzymatic activity. This chain is ATP phosphoribosyltransferase, found in Salmonella choleraesuis (strain SC-B67).